The following is a 391-amino-acid chain: GATA-binding factor 6-A (391 aa).

Residues 57–111 (GAHSVNSHWSQATSESSSFNNSSPHTSSRYHYPPSPPMHNGSTRDTGYSSSLTVS) form a disordered region. Low complexity predominate over residues 66–83 (SQATSESSSFNNSSPHTS). Residues 96–111 (NGSTRDTGYSSSLTVS) show a composition bias toward polar residues. 2 GATA-type zinc fingers span residues 182-206 (CVNCGSVQTPLWRRDGTGHFLCNAC) and 236-260 (CANCHTSTTTLWRRNTEGEPVCNAC). Residues 274–355 (AMKKEGIQTR…TESTSPNSNT (82 aa)) form a disordered region. The span at 282-291 (TRKRKPKTLN) shows a compositional bias: basic residues. The span at 292 to 319 (KSKSSSSNGNSSHQISMTPTSTTSSTNS) shows a compositional bias: low complexity. Over residues 326–355 (GSPSQNTTPVVASSLMSTQQTESTSPNSNT) the composition is skewed to polar residues.

In embryos, expressed in the presumptive heart mesoderm. In adults, expressed at high levels in heart, small intestine, and stomach and at lower levels in lung, pancreas and colon.

The protein localises to the nucleus. Functionally, transcriptional activator that binds 5'-GATA-3'-containing motifs within gene promoters. Regulates cardiac-specific transcription during embryogenesis and thereby cardiogenesis. The sequence is that of GATA-binding factor 6-A (gata6-a) from Xenopus laevis (African clawed frog).